The sequence spans 141 residues: uncharacterized protein (141 aa).

The HTH marR-type domain occupies 4–139; it reads RTQMMYDMET…LIELFSKLDK (136 aa). The H-T-H motif DNA-binding region spans 53–76; sequence VTEFAPILEVSASHITAVTDALVE.

This is an uncharacterized protein from Bacillus subtilis (strain 168).